The chain runs to 337 residues: Ferrochelatase (337 aa).

Fe cation-binding residues include histidine 189 and glutamate 293.

This sequence belongs to the ferrochelatase family.

It is found in the cytoplasm. It catalyses the reaction heme b + 2 H(+) = protoporphyrin IX + Fe(2+). The protein operates within porphyrin-containing compound metabolism; protoheme biosynthesis; protoheme from protoporphyrin-IX: step 1/1. Catalyzes the ferrous insertion into protoporphyrin IX. This Pseudomonas putida (strain W619) protein is Ferrochelatase.